Here is a 375-residue protein sequence, read N- to C-terminus: Odorant receptor 49b (375 aa).

The Cytoplasmic portion of the chain corresponds to 1–28 (MFEDIQLIYMNIKILRFWALLYDKNLRR). The chain crosses the membrane as a helical span at residues 29–49 (YVCIGLASFHIFTQIVYMMST). At 50 to 60 (NEGLTGIIRNS) the chain is on the extracellular side. A helical membrane pass occupies residues 61-77 (YMLVLWINTVLRAYLLL). Residues 78–121 (ADHDRYLALIQKLTEAYYDLLNLNDSYISEILDQVNKVGKLMAR) lie on the Cytoplasmic side of the membrane. Residues 122 to 142 (GNLFFGMLTSMGFGLYPLSSS) form a helical membrane-spanning segment. Topologically, residues 143–176 (ERVLPFGSKIPGLNEYESPYYEMWYIFQMLITPM) are extracellular. A helical transmembrane segment spans residues 177-197 (GCCMYIPYTSLIVGLIMFGIV). At 198–251 (RCKALQHRLRQVALKHPYGDRDPRELREEIIACIRYQQSIIEYMDHINELTTMM) the chain is on the cytoplasmic side. Residues 252–272 (FLFELMAFSALLCALLFMLII) traverse the membrane as a helical segment. Over 273–278 (VSGTSQ) the chain is Extracellular. A helical transmembrane segment spans residues 279–299 (LIIVCMYINMILAQILALYWY). Residues 300 to 342 (ANELREQNLAVATAAYETEWFTFDVPLRKNILFMMMRAQRPAA) are Cytoplasmic-facing. A helical membrane pass occupies residues 343–363 (ILLGNIRPITLELFQNLLNTT). At 364-375 (YTFFTVLKRVYG) the chain is on the extracellular side.

Belongs to the insect chemoreceptor superfamily. Heteromeric odorant receptor channel (TC 1.A.69) family. Or30a subfamily. In terms of assembly, interacts with Orco. Complexes exist early in the endomembrane system in olfactory sensory neurons (OSNs), coupling these complexes to the conserved ciliary trafficking pathway. As to expression, expressed in olfactory sensory neurons in the antenna.

The protein localises to the cell membrane. Its function is as follows. Odorant receptor which mediates acceptance or avoidance behavior, depending on its substrates. The odorant receptor repertoire encodes a large collection of odor stimuli that vary widely in identity, intensity, and duration. May form a complex with Orco to form odorant-sensing units, providing sensitive and prolonged odorant signaling and calcium permeability. This Drosophila melanogaster (Fruit fly) protein is Odorant receptor 49b (Or49b).